Here is a 367-residue protein sequence, read N- to C-terminus: Phosphoribosylaminoimidazole-succinocarboxamide synthase (367 aa).

Belongs to the SAICAR synthetase family.

It carries out the reaction 5-amino-1-(5-phospho-D-ribosyl)imidazole-4-carboxylate + L-aspartate + ATP = (2S)-2-[5-amino-1-(5-phospho-beta-D-ribosyl)imidazole-4-carboxamido]succinate + ADP + phosphate + 2 H(+). It participates in purine metabolism; IMP biosynthesis via de novo pathway; 5-amino-1-(5-phospho-D-ribosyl)imidazole-4-carboxamide from 5-amino-1-(5-phospho-D-ribosyl)imidazole-4-carboxylate: step 1/2. The protein is Phosphoribosylaminoimidazole-succinocarboxamide synthase of Shewanella putrefaciens (strain CN-32 / ATCC BAA-453).